Consider the following 217-residue polypeptide: Somatotropin (217 aa).

Residues 1-27 (MATGSHTATLLLAVALLGLPWPQEAGA) form the signal peptide. H46 contacts Zn(2+). The cysteines at positions 79 and 190 are disulfide-linked. Residue S132 is modified to Phosphoserine. Zn(2+) is bound at residue E199. The cysteines at positions 207 and 215 are disulfide-linked.

Belongs to the somatotropin/prolactin family.

Its subcellular location is the secreted. Its function is as follows. Plays an important role in growth control. Its major role in stimulating body growth is to stimulate the liver and other tissues to secrete IGF1. It stimulates both the differentiation and proliferation of myoblasts. It also stimulates amino acid uptake and protein synthesis in muscle and other tissues. In Xanthonycticebus pygmaeus (Pygmy slow loris), this protein is Somatotropin (GH1).